The following is a 150-amino-acid chain: Calmodulin (150 aa).

EF-hand domains lie at 9 to 44 (EQIA…LGQS), 45 to 80 (PTAA…KMKD), 82 to 117 (DNEE…LGER), and 118 to 150 (LSQE…ISSK). The Ca(2+) site is built by Asp-22, Asp-24, Asp-26, Asn-28, Glu-33, Asp-58, Asp-60, Asn-62, Thr-64, Glu-69, Asp-95, Asp-97, Asn-99, Tyr-101, Glu-106, Asp-131, Asp-133, Asp-135, and Glu-142.

It belongs to the calmodulin family. As to quaternary structure, interacts with rng2.

The protein resides in the cytoplasm. The protein localises to the cytoskeleton. It is found in the microtubule organizing center. It localises to the spindle pole body. Its function is as follows. Calmodulin mediates the control of a large number of enzymes, ion channels and other proteins by Ca(2+). Among the enzymes to be stimulated by the calmodulin-Ca(2+) complex are a number of protein kinases and phosphatases. This chain is Calmodulin (cam1), found in Schizosaccharomyces pombe (strain 972 / ATCC 24843) (Fission yeast).